Reading from the N-terminus, the 128-residue chain is Keratin-associated protein 2-3 (128 aa).

Residues 5 to 112 (CCGSTLSSLS…SVQSPCCRPP (108 aa)) form a 10 X 5 AA repeats of C-C-[CDPQRWG]-[APRS]-[CIPSTVD] region.

Belongs to the KRTAP type 2 family. As to quaternary structure, interacts with hair keratins.

Its function is as follows. In the hair cortex, hair keratin intermediate filaments are embedded in an interfilamentous matrix, consisting of hair keratin-associated proteins (KRTAP), which are essential for the formation of a rigid and resistant hair shaft through their extensive disulfide bond cross-linking with abundant cysteine residues of hair keratins. The matrix proteins include the high-sulfur and high-glycine-tyrosine keratins. This chain is Keratin-associated protein 2-3 (KRTAP2-3), found in Homo sapiens (Human).